Here is a 314-residue protein sequence, read N- to C-terminus: Quinolinate synthase (314 aa).

Iminosuccinate contacts are provided by His-27 and Ser-44. A [4Fe-4S] cluster-binding site is contributed by Cys-89. Iminosuccinate-binding positions include Tyr-115–Asn-117 and Ser-132. Residue Cys-175 participates in [4Fe-4S] cluster binding. Residues His-201–Glu-203 and Thr-218 each bind iminosuccinate. Cys-271 lines the [4Fe-4S] cluster pocket.

Belongs to the quinolinate synthase family. Type 2 subfamily. [4Fe-4S] cluster is required as a cofactor.

It is found in the cytoplasm. It carries out the reaction iminosuccinate + dihydroxyacetone phosphate = quinolinate + phosphate + 2 H2O + H(+). It participates in cofactor biosynthesis; NAD(+) biosynthesis; quinolinate from iminoaspartate: step 1/1. Functionally, catalyzes the condensation of iminoaspartate with dihydroxyacetone phosphate to form quinolinate. The sequence is that of Quinolinate synthase from Ehrlichia chaffeensis (strain ATCC CRL-10679 / Arkansas).